A 695-amino-acid polypeptide reads, in one-letter code: C6 finger domain transcription factor nscR (695 aa).

The segment at residues 17-43 (CELCRERKVKCDKLDPCTNCASAGVVC) is a DNA-binding region (zn(2)-C6 fungal-type). Low complexity predominate over residues 101–113 (SMRSSASQSSNQD). Residues 101-146 (SMRSSASQSSNQDQESRDAIESISNETEDASAPTPDSSRMPLGDGG) are disordered.

The protein resides in the nucleus. In terms of biological role, transcription factor that specifically regulates the neosartoricin B biosynthesis gene cluster. In Arthroderma otae (strain ATCC MYA-4605 / CBS 113480) (Microsporum canis), this protein is C6 finger domain transcription factor nscR.